Here is a 291-residue protein sequence, read N- to C-terminus: ATP phosphoribosyltransferase (291 aa).

It belongs to the ATP phosphoribosyltransferase family. Long subfamily. Mg(2+) serves as cofactor.

The protein resides in the cytoplasm. The enzyme catalyses 1-(5-phospho-beta-D-ribosyl)-ATP + diphosphate = 5-phospho-alpha-D-ribose 1-diphosphate + ATP. Its pathway is amino-acid biosynthesis; L-histidine biosynthesis; L-histidine from 5-phospho-alpha-D-ribose 1-diphosphate: step 1/9. Feedback inhibited by histidine. Its function is as follows. Catalyzes the condensation of ATP and 5-phosphoribose 1-diphosphate to form N'-(5'-phosphoribosyl)-ATP (PR-ATP). Has a crucial role in the pathway because the rate of histidine biosynthesis seems to be controlled primarily by regulation of HisG enzymatic activity. The protein is ATP phosphoribosyltransferase of Geotalea uraniireducens (strain Rf4) (Geobacter uraniireducens).